We begin with the raw amino-acid sequence, 266 residues long: Protein YABBY 5 (266 aa).

The interval 1–22 is disordered; the sequence is MMSSAPETFSLDHLSQHQQQQP. The C4-type zinc finger occupies 36-63; the sequence is CNFCDTILAVGVPCSSLFKTVTVRCGHC. Over residues 119 to 141 the composition is skewed to low complexity; it reads ASPNVSSITSSNSSCANNAPATS. The segment at 119–174 is disordered; it reads ASPNVSSITSSNSSCANNAPATSMASAANKATQREPQQPKNAPSANRTSEKRQRVP. Residues 142–165 are compositionally biased toward polar residues; the sequence is MASAANKATQREPQQPKNAPSANR.

This sequence belongs to the YABBY family.

It localises to the nucleus. Functionally, may be involved in leaf cell growth and differentiation, rather than abaxial cell fate determination. This Oryza sativa subsp. indica (Rice) protein is Protein YABBY 5 (YAB5).